The primary structure comprises 2427 residues: Interferon-induced very large GTPase 1 (2427 aa).

The region spanning 1485–1726 (DKRLFVLSVL…KISDFKFRVQ (242 aa)) is the VLIG-type G domain. GTP-binding positions include 1495–1502 (GLQSSGKS), 1548–1551 (DTEG), and 1625–1628 (TAKD).

The protein belongs to the TRAFAC class dynamin-like GTPase superfamily. Very large inducible GTPase (VLIG) family. Widely expressed. Expressed at low basal level in lung, heart, thymus and spleen; at still lower level in liver, ovary, kidney and brain. Expressed at very weak level in testis. Undetectable in embryo.

The protein resides in the cytoplasm. Its subcellular location is the cytosol. The protein localises to the nucleus. This chain is Interferon-induced very large GTPase 1 (Gvin1), found in Mus musculus (Mouse).